A 108-amino-acid chain; its full sequence is Ig kappa chain V region 120 (108 aa).

The interval 1–23 (AFELTQTPSSVEAAVGGTVTIKC) is framework-1. The tract at residues 24 to 34 (QSSQSIGTYLA) is complementarity-determining-1. The framework-2 stretch occupies residues 35-49 (WYZZKPGQPPKLLIY). The interval 50–56 (RASTLAS) is complementarity-determining-2. Positions 57–88 (GVSSRFKGSGSGTEFTLTISGVECADAATYYC) are framework-3. The interval 89 to 97 (QGTYYZSAS) is complementarity-determining-3. The segment at 98–107 (FGGGTEVVVK) is framework-4.

The sequence is that of Ig kappa chain V region 120 from Oryctolagus cuniculus (Rabbit).